The primary structure comprises 109 residues: Biphenyl dioxygenase system ferredoxin subunit (109 aa).

A Rieske domain is found at 4 to 100; that stretch reads TRVCDRRDVP…IRIEDNDVLV (97 aa). [2Fe-2S] cluster contacts are provided by Cys43, His45, Cys63, and His66.

It belongs to the bacterial ring-hydroxylating dioxygenase ferredoxin component family. As to quaternary structure, this dioxygenase system consists of four proteins: the two subunits of the hydroxylase component (BphA and BphE), a ferredoxin (BphF) and a ferredoxin reductase (BphG).

This protein seems to be a 2Fe-2S ferredoxin. This chain is Biphenyl dioxygenase system ferredoxin subunit (bphF), found in Paraburkholderia xenovorans (strain LB400).